Here is an 898-residue protein sequence, read N- to C-terminus: Serine/threonine-protein kinase PKH3 (898 aa).

A Protein kinase domain is found at 11-293; that stretch reads FIFKEELGHG…LEQIKRHPYF (283 aa). Residues 17-25 and K41 contribute to the ATP site; that span reads LGHGSYSTV. The active-site Proton acceptor is the D138. Disordered stretches follow at residues 435-484 and 675-850; these read PPKV…PSTE and DSKA…EKYS. Polar residues predominate over residues 459–468; that stretch reads PLQTSSIPQK. A compositionally biased stretch (low complexity) spans 469–483; it reads LSTSSASSALSAPST. Residue S696 is modified to Phosphoserine. A compositionally biased stretch (polar residues) spans 697–721; the sequence is IGNNVTTLSYTAKNGSQNNAPQNDN. The segment covering 723 to 738 has biased composition (basic and acidic residues); it reads GEEKPFRIPSSTKDRP. Polar residues-rich tracts occupy residues 740–758, 771–782, and 789–803; these read ANST…NNAG, SAPSTNTYTNGS, and RPST…NILT. A Phosphoserine modification is found at S753. Residues 804-817 show a composition bias toward low complexity; it reads SKKQGSSVFSPSSS. Polar residues predominate over residues 818 to 831; that stretch reads TTKPQIKTTGYRQP. S871 is subject to Phosphoserine.

This sequence belongs to the protein kinase superfamily. Ser/Thr protein kinase family.

It catalyses the reaction L-seryl-[protein] + ATP = O-phospho-L-seryl-[protein] + ADP + H(+). The catalysed reaction is L-threonyl-[protein] + ATP = O-phospho-L-threonyl-[protein] + ADP + H(+). In terms of biological role, serine/threonine-protein kinase which may phosphorylate the same targets substrates as PKH1 and PKH2, 2 upstream activators of PKC1. The sequence is that of Serine/threonine-protein kinase PKH3 (PKH3) from Saccharomyces cerevisiae (strain ATCC 204508 / S288c) (Baker's yeast).